The following is a 259-amino-acid chain: 7-cyano-7-deazaguanine synthase (259 aa).

ATP is bound at residue 32–42; sequence LSGGLDSVTCL. Cysteine 223, cysteine 233, cysteine 236, and cysteine 239 together coordinate Zn(2+).

Belongs to the QueC family. It depends on Zn(2+) as a cofactor.

The enzyme catalyses 7-carboxy-7-deazaguanine + NH4(+) + ATP = 7-cyano-7-deazaguanine + ADP + phosphate + H2O + H(+). It participates in purine metabolism; 7-cyano-7-deazaguanine biosynthesis. Functionally, catalyzes the ATP-dependent conversion of 7-carboxy-7-deazaguanine (CDG) to 7-cyano-7-deazaguanine (preQ(0)). This is 7-cyano-7-deazaguanine synthase from Psychrobacter cryohalolentis (strain ATCC BAA-1226 / DSM 17306 / VKM B-2378 / K5).